Consider the following 149-residue polypeptide: Calmodulin-B (149 aa).

A2 is modified (N-acetylalanine). EF-hand domains are found at residues 8–43, 44–79, 81–116, and 117–149; these read EQIAEFKEAFSLFDKDGDGTITTKELGTVMRSLGQN, PTEAELQDMINEVDADGNGTIDFPEFLTMMARKMKE, DSEEEIREAFRVFDKDGNGFISAAELRHVMTNLGEK, and LTDEEVDEMIREADIDGDGQVNYEEFVTMMTCK. Ca(2+) is bound by residues D21, D23, D25, T27, E32, D57, D59, N61, T63, E68, D94, D96, N98, and E105. The residue at position 116 (K116) is an N6,N6,N6-trimethyllysine. Residues D130, D132, D134, Q136, and E141 each contribute to the Ca(2+) site.

Belongs to the calmodulin family.

Functionally, calmodulin mediates the control of a large number of enzymes, ion channels and other proteins by Ca(2+). Among the enzymes to be stimulated by the calmodulin-Ca(2+) complex are a number of protein kinases and phosphatases. This chain is Calmodulin-B, found in Halocynthia roretzi (Sea squirt).